Reading from the N-terminus, the 396-residue chain is Putative nickel insertion protein (396 aa).

This sequence belongs to the LarC family.

This Methanosarcina mazei (strain ATCC BAA-159 / DSM 3647 / Goe1 / Go1 / JCM 11833 / OCM 88) (Methanosarcina frisia) protein is Putative nickel insertion protein.